Consider the following 165-residue polypeptide: Large ribosomal subunit protein mL49 (165 aa).

Residues 42-75 show a composition bias toward low complexity; that stretch reads TTATTTTPLQQQQQQQPTTQPTTPIQTQTGAAPT. The interval 42–81 is disordered; it reads TTATTTTPLQQQQQQQPTTQPTTPIQTQTGAAPTESTKPV.

It belongs to the mitochondrion-specific ribosomal protein mL49 family. In terms of assembly, component of the mitochondrial large ribosomal subunit (mt-LSU). Mature N.crassa 74S mitochondrial ribosomes consist of a small (37S) and a large (54S) subunit. The 37S small subunit contains a 16S ribosomal RNA (16S mt-rRNA) and 32 different proteins. The 54S large subunit contains a 23S rRNA (23S mt-rRNA) and 42 different proteins.

The protein localises to the mitochondrion. Its function is as follows. Component of the mitochondrial ribosome (mitoribosome), a dedicated translation machinery responsible for the synthesis of mitochondrial genome-encoded proteins, including at least some of the essential transmembrane subunits of the mitochondrial respiratory chain. The mitoribosomes are attached to the mitochondrial inner membrane and translation products are cotranslationally integrated into the membrane. The polypeptide is Large ribosomal subunit protein mL49 (img2) (Neurospora crassa (strain ATCC 24698 / 74-OR23-1A / CBS 708.71 / DSM 1257 / FGSC 987)).